A 192-amino-acid polypeptide reads, in one-letter code: 7-methyl-GTP pyrophosphatase (192 aa).

The Proton acceptor role is filled by aspartate 69.

The protein belongs to the Maf family. YceF subfamily. It depends on a divalent metal cation as a cofactor.

It localises to the cytoplasm. It carries out the reaction N(7)-methyl-GTP + H2O = N(7)-methyl-GMP + diphosphate + H(+). Its function is as follows. Nucleoside triphosphate pyrophosphatase that hydrolyzes 7-methyl-GTP (m(7)GTP). May have a dual role in cell division arrest and in preventing the incorporation of modified nucleotides into cellular nucleic acids. In Pseudomonas aeruginosa (strain ATCC 15692 / DSM 22644 / CIP 104116 / JCM 14847 / LMG 12228 / 1C / PRS 101 / PAO1), this protein is 7-methyl-GTP pyrophosphatase.